The chain runs to 224 residues: MESKKEGVASAPTSPESRRTRSNGKGKTIAEATPPSVTVVSTKVTPSPRGGWRKGAAILDFILRLGAISSAIGAAAVMGNNEQILPFFTQFFQFHVQWDDFPMFQFFVFANGAAVVFLILSLPFSIVCIVRPFAVGPRLLLVIVDIFAMALVIAAASAAAAVVYLAHNGSQDANWIAICQQYTDFCQVTSQAVVASFVAAVFLICLIVLSSVALKKGLKREFGW.

The disordered stretch occupies residues 1-30 (MESKKEGVASAPTSPESRRTRSNGKGKTIA). Over 1–57 (MESKKEGVASAPTSPESRRTRSNGKGKTIAEATPPSVTVVSTKVTPSPRGGWRKGAA) the chain is Cytoplasmic. The chain crosses the membrane as a helical span at residues 58-78 (ILDFILRLGAISSAIGAAAVM). The Extracellular portion of the chain corresponds to 79 to 105 (GNNEQILPFFTQFFQFHVQWDDFPMFQ). The helical transmembrane segment at 106–126 (FFVFANGAAVVFLILSLPFSI) threads the bilayer. Topologically, residues 127 to 138 (VCIVRPFAVGPR) are cytoplasmic. A helical transmembrane segment spans residues 139 to 159 (LLLVIVDIFAMALVIAAASAA). Topologically, residues 160-191 (AAVVYLAHNGSQDANWIAICQQYTDFCQVTSQ) are extracellular. Asn-168 is a glycosylation site (N-linked (GlcNAc...) asparagine). Residues 192 to 212 (AVVASFVAAVFLICLIVLSSV) form a helical membrane-spanning segment. Residues 213 to 224 (ALKKGLKREFGW) are Cytoplasmic-facing.

It belongs to the Casparian strip membrane proteins (CASP) family. Homodimer and heterodimers.

Its subcellular location is the cell membrane. Regulates membrane-cell wall junctions and localized cell wall deposition. Required for establishment of the Casparian strip membrane domain (CSD) and the subsequent formation of Casparian strips, a cell wall modification of the root endodermis that determines an apoplastic barrier between the intraorganismal apoplasm and the extraorganismal apoplasm and prevents lateral diffusion. This chain is Casparian strip membrane protein 3, found in Vigna unguiculata (Cowpea).